A 179-amino-acid chain; its full sequence is Large ribosomal subunit protein uL5 (179 aa).

It belongs to the universal ribosomal protein uL5 family. Part of the 50S ribosomal subunit; part of the 5S rRNA/L5/L18/L25 subcomplex. Contacts the 5S rRNA and the P site tRNA. Forms a bridge to the 30S subunit in the 70S ribosome.

Functionally, this is one of the proteins that bind and probably mediate the attachment of the 5S RNA into the large ribosomal subunit, where it forms part of the central protuberance. In the 70S ribosome it contacts protein S13 of the 30S subunit (bridge B1b), connecting the 2 subunits; this bridge is implicated in subunit movement. Contacts the P site tRNA; the 5S rRNA and some of its associated proteins might help stabilize positioning of ribosome-bound tRNAs. The protein is Large ribosomal subunit protein uL5 of Prochlorococcus marinus (strain NATL1A).